The chain runs to 534 residues: Dolichol kinase (534 aa).

Over 1 to 16 the chain is Cytoplasmic; it reads MTRQCPPQESGAALSG. A helical transmembrane segment spans residues 17-37; sequence SVLAEAAVVFAVVLSIHAAVW. Residues 38–72 lie on the Extracellular side of the membrane; it reads DRYSWCAVALAVQAFYVQYKWDRLLQQGNAVFQFR. The helical transmembrane segment at 73–93 threads the bilayer; that stretch reads MSANSGLLPASMVMPLLGLVM. Residues 94 to 109 lie on the Cytoplasmic side of the membrane; it reads KERCQTAGNPYFERFG. A helical membrane pass occupies residues 110-130; it reads IVVAATGMAVALFSSVLALGI. The Extracellular portion of the chain corresponds to 131–132; it reads TR. The chain crosses the membrane as a helical span at residues 133–153; that stretch reads PVPTNTCAISGLAGGVIIYIM. Over 154–161 the chain is Cytoplasmic; the sequence is RHSLSVGE. A helical membrane pass occupies residues 162–182; it reads VIEVLEVLLIFVYLNMILLYL. Topologically, residues 183-186 are extracellular; the sequence is LPRC. The chain crosses the membrane as a helical span at residues 187 to 207; it reads FTPGEALLVLGGISFVLNQLI. The Cytoplasmic portion of the chain corresponds to 208–220; the sequence is KRSLTESQGDPVD. Residues 221–241 form a helical membrane-spanning segment; the sequence is FFLLVVVVGMVLMGVFFSTLF. At 242-252 the chain is on the extracellular side; the sequence is VFMDSGTWASS. The chain crosses the membrane as a helical span at residues 253–273; sequence IFFHLMTCVLGLGVVLPWLHW. Over 274–293 the chain is Cytoplasmic; sequence LIRRNPLLWLLQFLFYTETR. The helical transmembrane segment at 294–314 threads the bilayer; the sequence is IYLLAYWSLLASVACLVVLYQ. At 315–333 the chain is on the extracellular side; that stretch reads NAKRSSSESKKHRAPTITR. The chain crosses the membrane as a helical span at residues 334-350; that stretch reads KYFHFIVVATYIPGIIF. Over 351 to 355 the chain is Cytoplasmic; sequence DRPLL. Residues 356 to 376 form a helical membrane-spanning segment; the sequence is YVAATVCLAVFIFLEYVRYFR. The Extracellular segment spans residues 377–397; the sequence is IKPLGHTLRSLLSLFLDERDS. Residues 398–418 traverse the membrane as a helical segment; that stretch reads GPLILTHIYLLLGMSLPIWLI. Residues 419–432 are Cytoplasmic-facing; that stretch reads PRPCTQKDSLEGAR. The chain crosses the membrane as a helical span at residues 433–453; it reads ALVPYAGVLAVGVGDTVASIF. The Extracellular portion of the chain corresponds to 454-468; that stretch reads GSTMGEIRWPGTKKT. The tract at residues 455-470 is CTP-binding; sequence STMGEIRWPGTKKTFE. A helical membrane pass occupies residues 469–489; the sequence is FEGTMTSIFAQIISVALILIF. The Cytoplasmic portion of the chain corresponds to 490–491; that stretch reads DS. The chain crosses the membrane as a helical span at residues 492–512; that stretch reads GVDLNYSYAWILGSISTVSLL. At 513–534 the chain is on the extracellular side; it reads EAYTTQIDNLLLPLYLLILLMA.

It belongs to the polyprenol kinase family.

The protein localises to the endoplasmic reticulum membrane. The enzyme catalyses a di-trans,poly-cis-dolichol + CTP = a di-trans,poly-cis-dolichyl phosphate + CDP + H(+). It participates in protein modification; protein glycosylation. Catalyzes CTP-mediated phosphorylation of dolichol, the terminal step in de novo dolichyl monophosphate (Dol-P) biosynthesis. Dol-P is a lipid carrier essential for the synthesis of N-linked and O-linked oligosaccharides and for GPI anchors. The polypeptide is Dolichol kinase (Mus musculus (Mouse)).